A 185-amino-acid chain; its full sequence is Ribosome-recycling factor (185 aa).

It belongs to the RRF family.

The protein localises to the cytoplasm. Its function is as follows. Responsible for the release of ribosomes from messenger RNA at the termination of protein biosynthesis. May increase the efficiency of translation by recycling ribosomes from one round of translation to another. The chain is Ribosome-recycling factor from Citrifermentans bemidjiense (strain ATCC BAA-1014 / DSM 16622 / JCM 12645 / Bem) (Geobacter bemidjiensis).